Reading from the N-terminus, the 283-residue chain is 2-dehydro-3-deoxyphosphooctonate aldolase (283 aa).

It belongs to the KdsA family.

The protein resides in the cytoplasm. It catalyses the reaction D-arabinose 5-phosphate + phosphoenolpyruvate + H2O = 3-deoxy-alpha-D-manno-2-octulosonate-8-phosphate + phosphate. Its pathway is carbohydrate biosynthesis; 3-deoxy-D-manno-octulosonate biosynthesis; 3-deoxy-D-manno-octulosonate from D-ribulose 5-phosphate: step 2/3. It functions in the pathway bacterial outer membrane biogenesis; lipopolysaccharide biosynthesis. The sequence is that of 2-dehydro-3-deoxyphosphooctonate aldolase from Shewanella frigidimarina (strain NCIMB 400).